A 515-amino-acid chain; its full sequence is Maturase K (515 aa).

The protein belongs to the intron maturase 2 family. MatK subfamily.

The protein resides in the plastid. It is found in the chloroplast. Its function is as follows. Usually encoded in the trnK tRNA gene intron. Probably assists in splicing its own and other chloroplast group II introns. The protein is Maturase K of Ceratophyllum demersum (Rigid hornwort).